Consider the following 270-residue polypeptide: Undecaprenyl-diphosphatase 1 (270 aa).

7 helical membrane-spanning segments follow: residues 5–25 (YYVLKYLILGLFQGLTEPIPI), 42–62 (IEGFSFELLVNSASLLAVLLI), 89–109 (FFFIIYLVIATIPAGVIGVLF), 117–137 (LKGVKMVGISLLITAVGLWII), 192–212 (FSFLLYIPVSLGGLLLSITDI), 220–240 (TLFVPYVVAFIATFIMTYISL), and 250–270 (GNLKYFSFYCIIVGVLTLIFL).

This sequence belongs to the UppP family.

It localises to the cell membrane. The catalysed reaction is di-trans,octa-cis-undecaprenyl diphosphate + H2O = di-trans,octa-cis-undecaprenyl phosphate + phosphate + H(+). Its function is as follows. Catalyzes the dephosphorylation of undecaprenyl diphosphate (UPP). Confers resistance to bacitracin. This is Undecaprenyl-diphosphatase 1 from Bacillus cereus (strain ATCC 14579 / DSM 31 / CCUG 7414 / JCM 2152 / NBRC 15305 / NCIMB 9373 / NCTC 2599 / NRRL B-3711).